The primary structure comprises 376 residues: UPF0754 membrane protein Sca_1420 (376 aa).

2 helical membrane passes run 4 to 24 (FLVI…TNII) and 356 to 376 (LLGF…ALFV).

It belongs to the UPF0754 family.

It localises to the cell membrane. This Staphylococcus carnosus (strain TM300) protein is UPF0754 membrane protein Sca_1420.